The following is a 317-amino-acid chain: Melanocyte-stimulating hormone receptor (317 aa).

Residues Met1 to Gly28 are disordered. Over Met1–Glu37 the chain is Extracellular. The N-linked (GlcNAc...) asparagine glycan is linked to Asn29. A helical transmembrane segment spans residues Val38 to Ile63. The Cytoplasmic segment spans residues Ala64–Pro72. A helical transmembrane segment spans residues Met73 to Leu93. Over Glu94–Asn118 the chain is Extracellular. The helical transmembrane segment at Ala119–Val140 threads the bilayer. Residues Asp141–Trp163 lie on the Cytoplasmic side of the membrane. Residues Ala164–Tyr183 traverse the membrane as a helical segment. The Extracellular portion of the chain corresponds to Asp184–Cys191. The chain crosses the membrane as a helical span at residues Leu192–Leu211. Topologically, residues Ala212–Ala240 are cytoplasmic. Residues Ala241–Leu266 form a helical membrane-spanning segment. Over Cys267–Asn279 the chain is Extracellular. The chain crosses the membrane as a helical span at residues Phe280–Phe300. Residues Arg301 to Trp317 are Cytoplasmic-facing. Cys315 carries the S-palmitoyl cysteine lipid modification.

This sequence belongs to the G-protein coupled receptor 1 family. As to quaternary structure, interacts with MGRN1, but does not undergo MGRN1-mediated ubiquitination; this interaction competes with GNAS-binding and thus inhibits agonist-induced cAMP production. Interacts with OPN3; the interaction results in a decrease in MC1R-mediated cAMP signaling and ultimately a decrease in melanin production in melanocytes.

It localises to the cell membrane. Functionally, receptor for MSH (alpha, beta and gamma) and ACTH. The activity of this receptor is mediated by G proteins which activate adenylate cyclase. Mediates melanogenesis, the production of eumelanin (black/brown) and phaeomelanin (red/yellow), via regulation of cAMP signaling in melanocytes. The polypeptide is Melanocyte-stimulating hormone receptor (MC1R) (Mammuthus primigenius (Siberian woolly mammoth)).